Reading from the N-terminus, the 393-residue chain is Dual specificity mitogen-activated protein kinase kinase 1 (393 aa).

The tract at residues 1 to 27 is disordered; that stretch reads MPKKKPTPIQLNPAPDGSAVNGTSSAE. The Protein kinase domain maps to 68–361; it reads FEKISELGAG…LKQLMVHAFI (294 aa). Residues 74-82 and Lys-97 contribute to the ATP site; that span reads LGAGNGGVV. The Proton acceptor role is filled by Asp-190. Residues Ser-218 and Ser-222 each carry the phosphoserine; by RAF modification. The segment at 270–307 is RAF1-binding; that stretch reads ELELMFGCQVEGDAAETPPRPRTPGRPLSSYGMDSRPP. Thr-286 carries the post-translational modification Phosphothreonine. At Thr-292 the chain carries Phosphothreonine; by MAPK1. Ser-298 is subject to Phosphoserine; by PAK.

Belongs to the protein kinase superfamily. STE Ser/Thr protein kinase family. MAP kinase kinase subfamily. In terms of assembly, found in a complex with at least BRAF, HRAS, MAP2K1, MAPK3/ERK1 and RGS14. Forms a heterodimer with MAP2K2/MEK2. Forms heterodimers with KSR2 which further dimerize to form tetramers. Interacts with KSR1 or KSR2 and BRAF; the interaction with KSR1 or KSR2 mediates KSR1-BRAF or KSR2-BRAF dimerization. Interacts with ARBB2, LAMTOR3, MAPK1/ERK2 and RAF1. Interacts with MAPK1/ERK2. Interacts with MORG1. Interacts with PPARG. Interacts with SGK1. Interacts with BIRC6/bruce. Interacts with KAT7; the interaction promotes KAT7 phosphorylation. Interacts with RAF1 and NEK10; the interaction is required for ERK1/2-signaling pathway activation in response to UV irradiation. Interacts with TRAF3IP3. Interacts with MOS. Phosphorylation at Ser-218 and Ser-222 by MAP kinase kinase kinases (RAF or MEKK1) positively regulates the kinase activity. Also phosphorylated at Thr-292 by MAPK1/ERK2 and at Ser-298 by PAK. MAPK1/ERK2 phosphorylation of Thr-292 occurs in response to cellular adhesion and leads to inhibition of Ser-298 phosphorylation by PAK. Autophosphorylated at Ser-218 and Ser-222, autophosphosphorylation is promoted by NEK10 following UV irradiation.

It is found in the cytoplasm. The protein resides in the cytoskeleton. Its subcellular location is the microtubule organizing center. The protein localises to the centrosome. It localises to the spindle pole body. It is found in the nucleus. The protein resides in the membrane. It carries out the reaction L-seryl-[protein] + ATP = O-phospho-L-seryl-[protein] + ADP + H(+). It catalyses the reaction L-threonyl-[protein] + ATP = O-phospho-L-threonyl-[protein] + ADP + H(+). The enzyme catalyses L-tyrosyl-[protein] + ATP = O-phospho-L-tyrosyl-[protein] + ADP + H(+). With respect to regulation, ras proteins such as HRAS mediate the activation of RAF proteins such as RAF1 or BRAF which in turn activate extracellular signal-regulated kinases (ERK) through MAPK (mitogen-activated protein kinases) and ERK kinases MAP2K1/MEK1 and MAP2K2/MEK2. Activation occurs through phosphorylation of Ser-218 and Ser-222. MAP2K1/MEK1 binds KSR1 or KSR2 releasing the inhibitory intramolecular interaction between KSR1 or KSR2 protein kinase and N-terminal domains. This allows KSR1 or KSR2 dimerization with BRAF leading to BRAF activation and phosphorylation of MAP2K1. MAP2K1/MEK1 is also the target of negative feed-back regulation by its substrate kinases, such as MAPK1/ERK2. These phosphorylate MAP2K1/MEK1 on Thr-292, thereby facilitating dephosphorylation of the activating residues Ser-218 and Ser-222. Inhibited by serine/threonine phosphatase 2A. In terms of biological role, dual specificity protein kinase which acts as an essential component of the MAP kinase signal transduction pathway. Binding of extracellular ligands such as growth factors, cytokines and hormones to their cell-surface receptors activates RAS and this initiates RAF1 activation. RAF1 then further activates the dual-specificity protein kinases MAP2K1/MEK1 and MAP2K2/MEK2. Both MAP2K1/MEK1 and MAP2K2/MEK2 function specifically in the MAPK/ERK cascade, and catalyze the concomitant phosphorylation of a threonine and a tyrosine residue in a Thr-Glu-Tyr sequence located in the extracellular signal-regulated kinases MAPK3/ERK1 and MAPK1/ERK2, leading to their activation and further transduction of the signal within the MAPK/ERK cascade. Activates BRAF in a KSR1 or KSR2-dependent manner; by binding to KSR1 or KSR2 releases the inhibitory intramolecular interaction between KSR1 or KSR2 protein kinase and N-terminal domains which promotes KSR1 or KSR2-BRAF dimerization and BRAF activation. Depending on the cellular context, this pathway mediates diverse biological functions such as cell growth, adhesion, survival and differentiation, predominantly through the regulation of transcription, metabolism and cytoskeletal rearrangements. One target of the MAPK/ERK cascade is peroxisome proliferator-activated receptor gamma (PPARG), a nuclear receptor that promotes differentiation and apoptosis. MAP2K1/MEK1 has been shown to export PPARG from the nucleus. The MAPK/ERK cascade is also involved in the regulation of endosomal dynamics, including lysosome processing and endosome cycling through the perinuclear recycling compartment (PNRC), as well as in the fragmentation of the Golgi apparatus during mitosis. This chain is Dual specificity mitogen-activated protein kinase kinase 1 (MAP2K1), found in Oryctolagus cuniculus (Rabbit).